A 453-amino-acid polypeptide reads, in one-letter code: Ribulose bisphosphate carboxylase large chain (453 aa).

A propeptide spanning residues methionine 1–serine 2 is cleaved from the precursor. N-acetylproline is present on proline 3. Lysine 14 is modified (N6,N6,N6-trimethyllysine). The substrate site is built by asparagine 123 and threonine 173. The active-site Proton acceptor is the lysine 175. Lysine 177 contributes to the substrate binding site. Positions 201, 203, and 204 each coordinate Mg(2+). Lysine 201 carries the N6-carboxylysine modification. The Proton acceptor role is filled by histidine 294. Substrate is bound by residues arginine 295, histidine 327, and serine 379.

The protein belongs to the RuBisCO large chain family. Type I subfamily. As to quaternary structure, heterohexadecamer of 8 large chains and 8 small chains; disulfide-linked. The disulfide link is formed within the large subunit homodimers. Requires Mg(2+) as cofactor. In terms of processing, the disulfide bond which can form in the large chain dimeric partners within the hexadecamer appears to be associated with oxidative stress and protein turnover.

Its subcellular location is the plastid. The protein resides in the chloroplast. The catalysed reaction is 2 (2R)-3-phosphoglycerate + 2 H(+) = D-ribulose 1,5-bisphosphate + CO2 + H2O. It catalyses the reaction D-ribulose 1,5-bisphosphate + O2 = 2-phosphoglycolate + (2R)-3-phosphoglycerate + 2 H(+). Functionally, ruBisCO catalyzes two reactions: the carboxylation of D-ribulose 1,5-bisphosphate, the primary event in carbon dioxide fixation, as well as the oxidative fragmentation of the pentose substrate in the photorespiration process. Both reactions occur simultaneously and in competition at the same active site. This is Ribulose bisphosphate carboxylase large chain from Galium palustre (Common marsh bedstraw).